The sequence spans 270 residues: MPGKHQHFQEPEVGCCGKYFLFGFNIVFWVLGALFLAIGLWAWSEKGVLSNISALTDLGGLDPVWLFVVVGGVMSVLGFAGCIGALRENTFLLKFFSVFLGLIFFLELATGILAFVFKDWIRDQLNLFINNNVKAYRDDIDLQNLIDFAQEYWSCCGARGPNDWNLNIYFNCTDLNPSRERCGVPFSCCVRDPAEDVLNTQCGYDVRLKLELEQQGFIHTKGCVGQFEKWLQDNLIVVAGVFVGIALLQIFGICLAQNLVSDIKAVKANW.

The Cytoplasmic segment spans residues 1–19 (MPGKHQHFQEPEVGCCGKY). Residues 20–40 (FLFGFNIVFWVLGALFLAIGL) form a helical membrane-spanning segment. Residues 41-63 (WAWSEKGVLSNISALTDLGGLDP) lie on the Extracellular side of the membrane. N51 is a glycosylation site (N-linked (GlcNAc...) asparagine). A helical membrane pass occupies residues 64-84 (VWLFVVVGGVMSVLGFAGCIG). Over 85–94 (ALRENTFLLK) the chain is Cytoplasmic. Residues 95–115 (FFSVFLGLIFFLELATGILAF) form a helical membrane-spanning segment. The Extracellular segment spans residues 116–234 (VFKDWIRDQL…GQFEKWLQDN (119 aa)). 4 disulfides stabilise this stretch: C155–C223, C156–C188, C172–C182, and C189–C202. N171 is a glycosylation site (N-linked (GlcNAc...) asparagine). The helical transmembrane segment at 235 to 255 (LIVVAGVFVGIALLQIFGICL) threads the bilayer. The Cytoplasmic segment spans residues 256–270 (AQNLVSDIKAVKANW).

This sequence belongs to the tetraspanin (TM4SF) family. Interacts with ADAM10; the interaction influences ADAM10 substrate specificity, endocytosis and turnover.

Its subcellular location is the cell membrane. Functionally, part of TspanC8 subgroup, composed of 6 members that interact with the transmembrane metalloprotease ADAM10. This interaction is required for ADAM10 exit from the endoplasmic reticulum and for enzymatic maturation and trafficking to the cell surface as well as substrate specificity. Different TspanC8/ADAM10 complexes have distinct substrates. Seems to regulate VE-cadherin expression in endothelial cells probably through interaction with ADAM10, promoting leukocyte transmigration. This Bos taurus (Bovine) protein is Tetraspanin-17 (TSPAN17).